Here is a 173-residue protein sequence, read N- to C-terminus: Probable F-box protein At1g27490 (173 aa).

Positions 1–46 (MEWSLPVDLQEEILSRVPAKSLARWKSTPKQWKGPISIEFLHLLRS) constitute an F-box domain.

The protein is Probable F-box protein At1g27490 of Arabidopsis thaliana (Mouse-ear cress).